A 409-amino-acid polypeptide reads, in one-letter code: N-acetylglucosamine-6-phosphate deacetylase (409 aa).

Glutamate 143 serves as a coordination point for a divalent metal cation. Residue 154 to 155 (AH) coordinates substrate. A divalent metal cation-binding residues include histidine 211 and histidine 232. Residues 235–236 (NA), arginine 243, and 269–272 (DGIH) each bind substrate. Aspartate 294 (proton donor/acceptor) is an active-site residue. 328–330 (LGG) contributes to the substrate binding site.

Belongs to the metallo-dependent hydrolases superfamily. NagA family. A divalent metal cation serves as cofactor.

It catalyses the reaction N-acetyl-D-glucosamine 6-phosphate + H2O = D-glucosamine 6-phosphate + acetate. The protein operates within amino-sugar metabolism; N-acetylneuraminate degradation. In terms of biological role, hydrolyzes the N-glycolyl group from N-glycolylglucosamine 6-phosphate (GlcNGc-6-P) in the N-glycolylneuraminic acid (Neu5Gc) degradation pathway. The polypeptide is N-acetylglucosamine-6-phosphate deacetylase (Amdhd2) (Mus musculus (Mouse)).